The chain runs to 259 residues: Proteasome subunit beta type-4 (259 aa).

The protein belongs to the peptidase T1B family. As to quaternary structure, the 26S proteasome consists of a 20S proteasome core and two 19S regulatory subunits. The 20S proteasome core is composed of 28 subunits that are arranged in four stacked rings, resulting in a barrel-shaped structure. The two end rings are each formed by seven alpha subunits, and the two central rings are each formed by seven beta subunits. The catalytic chamber with the active sites is on the inside of the barrel.

The protein resides in the cytoplasm. It is found in the nucleus. In terms of biological role, non-catalytic component of the proteasome, a multicatalytic proteinase complex which is characterized by its ability to cleave peptides with Arg, Phe, Tyr, Leu, and Glu adjacent to the leaving group at neutral or slightly basic pH. The proteasome has an ATP-dependent proteolytic activity. The protein is Proteasome subunit beta type-4 (psmB4-1) of Dictyostelium discoideum (Social amoeba).